The following is a 465-amino-acid chain: Ribulose bisphosphate carboxylase large chain (465 aa).

N6,N6,N6-trimethyllysine is present on Lys-4. The substrate site is built by Asn-113 and Thr-163. Residue Lys-165 is the Proton acceptor of the active site. Lys-167 lines the substrate pocket. 3 residues coordinate Mg(2+): Lys-191, Asp-193, and Glu-194. Lys-191 is subject to N6-carboxylysine. His-284 acts as the Proton acceptor in catalysis. Substrate contacts are provided by Arg-285, His-317, and Ser-369.

This sequence belongs to the RuBisCO large chain family. Type I subfamily. Heterohexadecamer of 8 large chains and 8 small chains; disulfide-linked. The disulfide link is formed within the large subunit homodimers. It depends on Mg(2+) as a cofactor. In terms of processing, the disulfide bond which can form in the large chain dimeric partners within the hexadecamer appears to be associated with oxidative stress and protein turnover.

It is found in the plastid. It localises to the chloroplast. The catalysed reaction is 2 (2R)-3-phosphoglycerate + 2 H(+) = D-ribulose 1,5-bisphosphate + CO2 + H2O. The enzyme catalyses D-ribulose 1,5-bisphosphate + O2 = 2-phosphoglycolate + (2R)-3-phosphoglycerate + 2 H(+). RuBisCO catalyzes two reactions: the carboxylation of D-ribulose 1,5-bisphosphate, the primary event in carbon dioxide fixation, as well as the oxidative fragmentation of the pentose substrate in the photorespiration process. Both reactions occur simultaneously and in competition at the same active site. The chain is Ribulose bisphosphate carboxylase large chain from Ephedra tweediana (Vining horsetail).